The sequence spans 309 residues: MNKANIFCTDTNMKVILFSEVSVGISANSILFISHLCMFLGESRPKPIDLYIAFFSLTHLMLLVTMGLIAVDMFMPGGRWDSTTCTFLMYLHIVLRGPTLCATCLLNVLWTITLSPRNSCLTKFKHKSPHHISGAFLFLCVLYMSLSSELLSITASLNLTSENFLYVSQSCSILPMSYSIKSMFSTKMAIREAFLIGLMVLSSGYMVALLWSHKKQAQHLHSNSLSLKASPEQRATRTIMLLMSFFVVFYILDSVIFYSRMKFKDDSIFVCVQIIVSHSYVTVSPFVFICTEKHIIKFFWSLCGRIVNI.

The Extracellular segment spans residues 1–20 (MNKANIFCTDTNMKVILFSE). The chain crosses the membrane as a helical span at residues 21–41 (VSVGISANSILFISHLCMFLG). The Cytoplasmic portion of the chain corresponds to 42–50 (ESRPKPIDL). Residues 51 to 71 (YIAFFSLTHLMLLVTMGLIAV) traverse the membrane as a helical segment. The Extracellular portion of the chain corresponds to 72-85 (DMFMPGGRWDSTTC). C85 and C171 are oxidised to a cystine. A helical transmembrane segment spans residues 86-106 (TFLMYLHIVLRGPTLCATCLL). The Cytoplasmic portion of the chain corresponds to 107-134 (NVLWTITLSPRNSCLTKFKHKSPHHISG). The chain crosses the membrane as a helical span at residues 135 to 155 (AFLFLCVLYMSLSSELLSITA). Residues 156-192 (SLNLTSENFLYVSQSCSILPMSYSIKSMFSTKMAIRE) are Extracellular-facing. Residue N158 is glycosylated (N-linked (GlcNAc...) asparagine). The chain crosses the membrane as a helical span at residues 193 to 213 (AFLIGLMVLSSGYMVALLWSH). Topologically, residues 214 to 237 (KKQAQHLHSNSLSLKASPEQRATR) are cytoplasmic. A helical membrane pass occupies residues 238–258 (TIMLLMSFFVVFYILDSVIFY). Over 259–267 (SRMKFKDDS) the chain is Extracellular. The chain crosses the membrane as a helical span at residues 268 to 288 (IFVCVQIIVSHSYVTVSPFVF). Residues 289–309 (ICTEKHIIKFFWSLCGRIVNI) are Cytoplasmic-facing.

Belongs to the G-protein coupled receptor 1 family.

It localises to the cell membrane. In terms of biological role, putative pheromone receptor implicated in the regulation of social and reproductive behavior. The polypeptide is Vomeronasal type-1 receptor 46 (Vmn1r46) (Mus musculus (Mouse)).